The chain runs to 640 residues: Threonine--tRNA ligase (640 aa).

The 61-residue stretch at 1–61 folds into the TGS domain; the sequence is MPTITLPDGS…ACDADVTIIT (61 aa). The segment at 243 to 534 is catalytic; that stretch reads DHRKIGKALD…LIEQYAGNMP (292 aa). Zn(2+)-binding residues include cysteine 334, histidine 385, and histidine 511.

It belongs to the class-II aminoacyl-tRNA synthetase family. In terms of assembly, homodimer. Requires Zn(2+) as cofactor.

The protein localises to the cytoplasm. It carries out the reaction tRNA(Thr) + L-threonine + ATP = L-threonyl-tRNA(Thr) + AMP + diphosphate + H(+). Functionally, catalyzes the attachment of threonine to tRNA(Thr) in a two-step reaction: L-threonine is first activated by ATP to form Thr-AMP and then transferred to the acceptor end of tRNA(Thr). Also edits incorrectly charged L-seryl-tRNA(Thr). In Dichelobacter nodosus (strain VCS1703A), this protein is Threonine--tRNA ligase.